Consider the following 1848-residue polypeptide: Cellulose-binding protein A (1848 aa).

Positions 1-28 (MQKKKSLNLLLALMMVFALVLPSIPALA) are cleaved as a signal peptide. The 162-residue stretch at 29–190 (ATSSMSVEFY…GAKVLGTAPG (162 aa)) folds into the CBM3 domain. Cohesin domains follow at residues 291-428 (VTAT…TVTI), 435-570 (MQIS…SVTI), 668-801 (VTAT…SVTI), 810-943 (VTAT…SVTI), 952-1085 (VTAT…SVTI), 1094-1227 (VTAT…SVTI), 1236-1369 (VTAT…SVTI), 1377-1511 (VKAT…RLTI), and 1709-1847 (FAVK…SVKV).

In terms of processing, the N-terminus is blocked. Post-translationally, glycosylated.

The protein localises to the secreted. Its function is as follows. Binds to cellulose fibers and coordinates cellulase enzymes. The protein is Cellulose-binding protein A (cbpA) of Clostridium cellulovorans.